The chain runs to 400 residues: tRNA pseudouridine synthase Pus10 (400 aa).

The 118-residue stretch at 77–194 (QVYVELFGSP…DGSVSVQPRR (118 aa)) folds into the THUMP domain. Position 301 (Y301) interacts with substrate.

This sequence belongs to the pseudouridine synthase Pus10 family.

It catalyses the reaction uridine(54) in tRNA = pseudouridine(54) in tRNA. It carries out the reaction uridine(55) in tRNA = pseudouridine(55) in tRNA. Its function is as follows. Responsible for synthesis of pseudouridine from uracil-54 and uracil-55 in the psi GC loop of transfer RNAs. The sequence is that of tRNA pseudouridine synthase Pus10 from Acidilobus saccharovorans (strain DSM 16705 / JCM 18335 / VKM B-2471 / 345-15).